The primary structure comprises 598 residues: UvrABC system protein C (598 aa).

The 80-residue stretch at 13 to 92 (SSPGVYLMKD…IKKYQPRYNV (80 aa)) folds into the GIY-YIG domain. A UVR domain is found at 206 to 241 (RSTISNLEKAIEKASQEQKFEHAAALYRTLTLIRQT).

This sequence belongs to the UvrC family. In terms of assembly, interacts with UvrB in an incision complex.

It localises to the cytoplasm. The UvrABC repair system catalyzes the recognition and processing of DNA lesions. UvrC both incises the 5' and 3' sides of the lesion. The N-terminal half is responsible for the 3' incision and the C-terminal half is responsible for the 5' incision. The protein is UvrABC system protein C of Chlamydia trachomatis serovar A (strain ATCC VR-571B / DSM 19440 / HAR-13).